The chain runs to 108 residues: Ig kappa chain V-V region EPC 109 (108 aa).

Residues 1 to 23 are framework-1; sequence DVQMIQSPSSLSASLGDIVTMTC. Cysteine 23 and cysteine 88 form a disulfide bridge. The segment at 24-34 is complementarity-determining-1; sequence QASQGTNINLN. Residues 35 to 49 are framework-2; sequence WFQQKPGKAPKLLIY. A complementarity-determining-2 region spans residues 50–56; sequence GASILEA. The tract at residues 57 to 88 is framework-3; that stretch reads GVPSRFSGRRYGTDFTLTISSLEDEDMATYFC. The segment at 89-97 is complementarity-determining-3; sequence LQHSYLPYT. The framework-4 stretch occupies residues 98-108; sequence FGGGTKLEKKR.

This chain is Ig kappa chain V-V region EPC 109, found in Mus musculus (Mouse).